A 102-amino-acid polypeptide reads, in one-letter code: Small ribosomal subunit protein uS10 (102 aa).

Belongs to the universal ribosomal protein uS10 family. In terms of assembly, part of the 30S ribosomal subunit.

Functionally, involved in the binding of tRNA to the ribosomes. This is Small ribosomal subunit protein uS10 from Staphylococcus haemolyticus (strain JCSC1435).